The chain runs to 265 residues: MKAVVLAVAALFLAGGEARHFWQRDEPQASPWDKIKEFTTQYVDSVKDSGSEYLKQFETSALGTQMNLKLTENLDTLSSTFSKLREQLGPVTQEFWQNLEKDTEWLRQEMNKDLADMKQKVQPYMEQFQKTWQEEVERYRQKVEPLSTELREGARQKLQELQEKLAPLGADLRDSARVHVDALRTQLAPYSEQMRERLAERLAALRDSPSLAEYQAKAHEHLKTLHEKAQPALSDLGQGVLPVLESLKATLVGAIEEASKKLSSQ.

Positions 1–18 (MKAVVLAVAALFLAGGEA) are cleaved as a signal peptide. 2 consecutive repeat copies span residues 68 to 89 (LKLT…EQLG) and 90 to 111 (PVTQ…QEMN). Positions 68 to 265 (LKLTENLDTL…EEASKKLSSQ (198 aa)) are 10 X approximate tandem repeats. Met110 carries the post-translational modification Methionine sulfoxide. Residues 112 to 122 (KDLADMKQKVQ) form a 3; half-length repeat. 3 tandem repeats follow at residues 123-144 (PYME…QKVE), 145-166 (PLST…EKLA), and 167-188 (PLGA…TQLA). The stretch at 189 to 208 (PYSEQMRERLAERLAALRDS) is one 7; truncated repeat. The residue at position 194 (Met194) is a Methionine sulfoxide. The stretch at 209–230 (PSLAEYQAKAHEHLKTLHEKAQ) is repeat 8. A 9; half-length repeat occupies 231–241 (PALSDLGQGVL). The stretch at 242–265 (PVLESLKATLVGAIEEASKKLSSQ) is repeat 10.

It belongs to the apolipoprotein A1/A4/E family. As to quaternary structure, homodimer. Interacts with APOA1BP and CLU. Component of a sperm activating protein complex (SPAP), consisting of APOA1, an immunoglobulin heavy chain, an immunoglobulin light chain and albumin. Interacts with NDRG1. Interacts with SCGB3A2. Interacts with NAXE and YJEFN3. Post-translationally, glycosylated. In terms of processing, palmitoylated. Phosphorylation sites are present in the extracellular medium.

The protein localises to the secreted. Functionally, participates in the reverse transport of cholesterol from tissues to the liver for excretion by promoting cholesterol efflux from tissues and by acting as a cofactor for the lecithin cholesterol acyltransferase (LCAT). As part of the SPAP complex, activates spermatozoa motility. This is Apolipoprotein A-I (Apoa1) from Dipodomys ordii (Ord's kangaroo rat).